The following is a 360-amino-acid chain: Protein phosphatase 1L (360 aa).

The Extracellular segment spans residues 1–25; that stretch reads MIEDTMTLLSLLGRIMRYFLLRPET. The helical transmembrane segment at 26–42 threads the bilayer; sequence LFLLCISLALWSYFFHT. At 43-360 the chain is on the cytoplasmic side; it reads DEVKTIVKSS…FRNSSKTEEH (318 aa). The PPM-type phosphatase domain occupies 92–351; it reads NVAVYSIQGR…DNITVMVVKF (260 aa). Residues Asp128, Gly129, Asp302, and Asp342 each coordinate Mn(2+).

It belongs to the PP2C family. As to quaternary structure, interacts with MAP3K7/TAK1 and MAP3K5. It depends on Mg(2+) as a cofactor. Requires Mn(2+) as cofactor. As to expression, expressed in brain, heart, testis, liver, lung and skeletal muscle.

The protein resides in the membrane. It carries out the reaction O-phospho-L-seryl-[protein] + H2O = L-seryl-[protein] + phosphate. The catalysed reaction is O-phospho-L-threonyl-[protein] + H2O = L-threonyl-[protein] + phosphate. In terms of biological role, acts as a suppressor of the SAPK signaling pathways by associating with and dephosphorylating MAP3K7/TAK1 and MAP3K5, and by attenuating the association between MAP3K7/TAK1 and MAP2K4 or MAP2K6. This is Protein phosphatase 1L (Ppm1l) from Mus musculus (Mouse).